The primary structure comprises 210 residues: Ribosomal RNA large subunit methyltransferase E (210 aa).

The S-adenosyl-L-methionine site is built by glycine 61, tryptophan 63, aspartate 81, aspartate 97, and aspartate 122. Lysine 162 functions as the Proton acceptor in the catalytic mechanism.

This sequence belongs to the class I-like SAM-binding methyltransferase superfamily. RNA methyltransferase RlmE family.

Its subcellular location is the cytoplasm. The enzyme catalyses uridine(2552) in 23S rRNA + S-adenosyl-L-methionine = 2'-O-methyluridine(2552) in 23S rRNA + S-adenosyl-L-homocysteine + H(+). Specifically methylates the uridine in position 2552 of 23S rRNA at the 2'-O position of the ribose in the fully assembled 50S ribosomal subunit. The chain is Ribosomal RNA large subunit methyltransferase E from Xanthomonas axonopodis pv. citri (strain 306).